Reading from the N-terminus, the 593-residue chain is Prospero homeobox protein 2 (593 aa).

Disordered stretches follow at residues Cys24–Ser48, Ser79–Arg130, Thr153–Cys199, Gln260–Lys284, Pro298–Leu333, and Gly356–Leu388. Positions Arg87–Arg99 are enriched in basic and acidic residues. Low complexity predominate over residues Pro167–Ser181. Polar residues predominate over residues Trp363–Glu380. One can recognise a Prospero-type homeo domain in the interval Gln433–Met491. Residues Gln433–Phe591 form a homeo-Prospero region. In terms of domain architecture, Prospero spans Glu492–Phe591.

This sequence belongs to the Prospero homeodomain family. As to expression, expressed in testis.

Its subcellular location is the nucleus. Its function is as follows. Transcription regulator. Does not seem to be essential for embryonic development and postnatal survival. The polypeptide is Prospero homeobox protein 2 (Prox2) (Mus musculus (Mouse)).